The chain runs to 359 residues: MEIKVLECLKRLEEVEKQISDPNIFSNPKEYSSLSKEHARLSEIKNAHESLVATKKILQDDKLALSTEKDPEIVAMLEEGVLVGEEAVERLSKQLENLLIPPDPDDDLSVIMELRAGTGGDEAALFVGDCVRMYHLYAASKGWQCEVLSASESDLGGYKEYVMGISGASVKRFLQYEAGTHRVQRVPETETQGRVHTSAVTVAVLPEPAEDDEEVFIDEKDLRIDTFRSSGAGGQHVNVTDSAVRITHIPSGVVVTCQDERSQHKNKAKAMRVLKARIRDAEVQKRAQEASAMRSAQVGSGDRSERIRTYNFPQNRVTDHRIGLTLYNLDRVMEGELDMITTALVTHVHRQLFGHEETA.

N5-methylglutamine is present on Gln235. The disordered stretch occupies residues 287–312 (AQEASAMRSAQVGSGDRSERIRTYNF).

The protein belongs to the prokaryotic/mitochondrial release factor family. Methylated by PrmC. Methylation increases the termination efficiency of RF1.

It is found in the cytoplasm. Peptide chain release factor 1 directs the termination of translation in response to the peptide chain termination codons UAG and UAA. The polypeptide is Peptide chain release factor 1 (Chlamydia trachomatis serovar L2 (strain ATCC VR-902B / DSM 19102 / 434/Bu)).